The chain runs to 217 residues: tRNA (guanine-N(7)-)-methyltransferase (217 aa).

The S-adenosyl-L-methionine site is built by glutamate 44, glutamate 69, aspartate 96, and aspartate 118. Aspartate 118 is a catalytic residue. Residues lysine 122, aspartate 154, and 191 to 194 each bind substrate; that span reads TEYE.

This sequence belongs to the class I-like SAM-binding methyltransferase superfamily. TrmB family.

The enzyme catalyses guanosine(46) in tRNA + S-adenosyl-L-methionine = N(7)-methylguanosine(46) in tRNA + S-adenosyl-L-homocysteine. It functions in the pathway tRNA modification; N(7)-methylguanine-tRNA biosynthesis. Catalyzes the formation of N(7)-methylguanine at position 46 (m7G46) in tRNA. In Bacillus mycoides (strain KBAB4) (Bacillus weihenstephanensis), this protein is tRNA (guanine-N(7)-)-methyltransferase.